A 156-amino-acid polypeptide reads, in one-letter code: MPGVTVKDIDQHAVTKAVAVFLKKTGKLKVPDQMDIVKTAKFKELAPYDPDWFYVRCASILRHLYHRSPAGVGSITKIYGGRKRNGVHPSHFCRAADGAARKALQALEHARLVEKHPDGGRKLSSIGQRDLDRIANQIVFKQRDAAKQTGPIVISK.

Belongs to the eukaryotic ribosomal protein eS19 family.

This Drosophila melanogaster (Fruit fly) protein is Small ribosomal subunit protein eS19A (RpS19a).